The primary structure comprises 428 residues: Adenylosuccinate synthetase (428 aa).

GTP is bound by residues Gly-12 to Lys-18 and Gly-40 to Thr-42. Asp-13 (proton acceptor) is an active-site residue. The Mg(2+) site is built by Asp-13 and Gly-40. IMP is bound by residues Asp-13 to Lys-16, Asn-38 to His-41, Thr-130, Arg-144, Gln-225, Thr-240, and Arg-304. His-41 (proton donor) is an active-site residue. Val-300–Arg-306 lines the substrate pocket. Residues Arg-306, Lys-332–Asp-334, and Gly-414–Gly-416 contribute to the GTP site.

It belongs to the adenylosuccinate synthetase family. As to quaternary structure, homodimer. It depends on Mg(2+) as a cofactor.

It is found in the cytoplasm. The catalysed reaction is IMP + L-aspartate + GTP = N(6)-(1,2-dicarboxyethyl)-AMP + GDP + phosphate + 2 H(+). The protein operates within purine metabolism; AMP biosynthesis via de novo pathway; AMP from IMP: step 1/2. Functionally, plays an important role in the de novo pathway of purine nucleotide biosynthesis. Catalyzes the first committed step in the biosynthesis of AMP from IMP. This chain is Adenylosuccinate synthetase, found in Clostridium botulinum (strain Alaska E43 / Type E3).